The sequence spans 425 residues: MLDIKFIRSNPDVVRRAIELKGEKADLDRLLLLDEKRREMLVELEALKNKRNTESDNIARLKREGKDASELIAKMKELSDKIKDMEQELREIEEEMEKILWTIPNIPHESVPIGESDEDNVEVRRWGEPRKFDFEPKPHWEIGEALGILDFEAASRVTGSRFVFYKGLGARLERALINFMLDLHIEKHGYKEVFPPFLVHRRSMFGTGQLPKFEEDAFKVEGTDYFLIPTAEVPVTNLYRETIIDGEQLPIYHCAYSACFRQEAGAAGRDTRGLIRQHQFDKVELVKFTEPDKSYEELEKMTRDAEEVLQALGLPYRVVAICTGDLGFTASKKYDIEVWMPSYGRYVEISSCSNCEDFQARRANIRYRPKGGGKLQYVHTLNGSGVAVGRTFAAILENYQQEDGSVVVPEVLRPYMKVDVIRKEE.

230-232 provides a ligand contact to L-serine; the sequence is TAE. Residue 261–263 coordinates ATP; sequence RQE. L-serine is bound at residue glutamate 284. 348 to 351 is a binding site for ATP; the sequence is EISS. Serine 384 lines the L-serine pocket.

Belongs to the class-II aminoacyl-tRNA synthetase family. Type-1 seryl-tRNA synthetase subfamily. As to quaternary structure, homodimer. The tRNA molecule binds across the dimer.

It localises to the cytoplasm. The catalysed reaction is tRNA(Ser) + L-serine + ATP = L-seryl-tRNA(Ser) + AMP + diphosphate + H(+). It carries out the reaction tRNA(Sec) + L-serine + ATP = L-seryl-tRNA(Sec) + AMP + diphosphate + H(+). It functions in the pathway aminoacyl-tRNA biosynthesis; selenocysteinyl-tRNA(Sec) biosynthesis; L-seryl-tRNA(Sec) from L-serine and tRNA(Sec): step 1/1. In terms of biological role, catalyzes the attachment of serine to tRNA(Ser). Is also able to aminoacylate tRNA(Sec) with serine, to form the misacylated tRNA L-seryl-tRNA(Sec), which will be further converted into selenocysteinyl-tRNA(Sec). This is Serine--tRNA ligase from Caldanaerobacter subterraneus subsp. tengcongensis (strain DSM 15242 / JCM 11007 / NBRC 100824 / MB4) (Thermoanaerobacter tengcongensis).